A 216-amino-acid polypeptide reads, in one-letter code: Cytidylate kinase (216 aa).

9-17 (GPAASGKGT) is a binding site for ATP.

Belongs to the cytidylate kinase family. Type 1 subfamily.

It localises to the cytoplasm. The enzyme catalyses CMP + ATP = CDP + ADP. The catalysed reaction is dCMP + ATP = dCDP + ADP. The sequence is that of Cytidylate kinase from Caulobacter sp. (strain K31).